The sequence spans 254 residues: Distal membrane-arm assembly complex protein 2 (254 aa).

At Ser-250 the chain carries Phosphoserine.

This sequence belongs to the ATP synthase subunit s family. In terms of assembly, interacts with incompletely assembled mitochondrial NADH:ubiquinone oxidoreductase complex (complex I).

Its subcellular location is the mitochondrion. In terms of biological role, required for the assembly of the mitochondrial NADH:ubiquinone oxidoreductase complex (complex I). Involved in the assembly of the distal region of complex I. This chain is Distal membrane-arm assembly complex protein 2, found in Rattus norvegicus (Rat).